A 169-amino-acid chain; its full sequence is Myosin regulatory light chain 11 (169 aa).

Alanine 2 is subject to N,N,N-trimethylalanine. A phosphoserine mark is found at serine 15 and serine 16. A phosphothreonine mark is found at threonine 25 and threonine 35. Positions 25–60 constitute an EF-hand 1 domain; the sequence is TQIQEFKEAFTVIDQNRDGIIDKEDLRDTFAAMGRL. Ca(2+)-binding residues include aspartate 38, asparagine 40, aspartate 42, and aspartate 49. Serine 75 is subject to Phosphoserine. 2 EF-hand domains span residues 95-130 and 131-166; these read DPEDVITGAFKVLDPEGKGTIKKQFLEELLTTQCDR and FSQEEIKNMWAAFPPDVGGNVDYKNICYVITHGDAK. Phosphothreonine is present on threonine 101.

In terms of assembly, myosin is a hexamer of 2 heavy chains and 4 light chains.

Its function is as follows. Myosin regulatory subunit that plays an essential role to maintain muscle integrity during early development. Plays a role in regulation of muscle contraction. The protein is Myosin regulatory light chain 11 (Myl11) of Mus musculus (Mouse).